The following is a 458-amino-acid chain: uncharacterized protein (458 aa).

It belongs to the MG032/MG096/MG288 family.

This is an uncharacterized protein from Mycoplasma pneumoniae (strain ATCC 29342 / M129 / Subtype 1) (Mycoplasmoides pneumoniae).